Here is a 623-residue protein sequence, read N- to C-terminus: Protein EDS1L (623 aa).

N-acetylalanine is present on Ala-2. The active-site Nucleophile is the Ser-123. Catalysis depends on charge relay system residues Asp-187 and His-317.

In terms of assembly, homodimer. Interacts with RPS4, RPS6, SNC1, SRFR1, AvrRps4 and HopA1. Interacts with PAD4 (via N-terminus). Interacts with SAG101. EDS1-SAG101 and EDS1-PAD4 form separate complexes in pathogen-unchallenged cells.

It localises to the nucleus. The protein localises to the cytoplasm. The protein resides in the microsome. In terms of biological role, positive regulator of basal resistance and of effector-triggered immunity specifically mediated by TIR-NB-LRR resistance proteins. Disruption by bacterial effector of EDS1-TIR-NB-LRR resistance protein interactions constitutes the first step in resistance activation. Triggers early plant defenses and hypersensitive response independently of PAD4, and then recruits PAD4 to potentiate plant defenses through the accumulation of salicylic acid. Nuclear localization is essential for basal and TIR-NB-LRR-conditioned immunity and for reprogramming defense gene expression, while cytoplasmic EDS1 is required to induce a complete immune response. Heterodimerization with PAD4 or SGA101 is necessary for TNL-mediated effector-triggered immunity. Contributes to nonhost resistance against E.amylovora. Has no direct lipase activity. In Arabidopsis thaliana (Mouse-ear cress), this protein is Protein EDS1L.